The sequence spans 1343 residues: Spermatogenesis-associated protein 31A6 (1343 aa).

A helical membrane pass occupies residues Pro23 to Leu43. Disordered regions lie at residues Pro55–Pro88, Gly106–Ile235, Asp624–Lys654, Pro895–Val951, Val1080–Val1156, and Lys1309–His1331. Over residues Gly60 to Arg82 the composition is skewed to basic residues. Positions Leu165–Val178 are enriched in polar residues. Residues Pro198–Lys222 show a composition bias toward pro residues. 2 stretches are compositionally biased toward polar residues: residues Pro627–Glu647 and Leu923–Ala944. 2 stretches are compositionally biased toward basic and acidic residues: residues His1104 to Gly1123 and Arg1133 to Glu1142.

The protein belongs to the SPATA31 family.

It is found in the membrane. Functionally, may play a role in spermatogenesis. The protein is Spermatogenesis-associated protein 31A6 (SPATA31A6) of Homo sapiens (Human).